The primary structure comprises 1161 residues: Lysine-specific demethylase 2A (1161 aa).

Ser-28 is modified (phosphoserine). Positions Phe-148–Asp-316 constitute a JmjC domain. Residue Thr-209 coordinates substrate. Fe cation is bound by residues His-212 and Asp-214. Lys-229 serves as a coordination point for substrate. His-284 lines the Fe cation pocket. Phosphoserine is present on residues Ser-390 and Ser-394. The span at Lys-419–Ser-433 shows a compositional bias: low complexity. Residues Lys-419–Pro-445 are disordered. Phosphoserine is present on Ser-444. Residue Lys-505 forms a Glycyl lysine isopeptide (Lys-Gly) (interchain with G-Cter in SUMO2) linkage. A disordered region spans residues Val-532–Ala-557. Thr-550 carries the post-translational modification Phosphothreonine. Residue Ser-558 is modified to Phosphoserine. Residues Ala-564–Leu-610 form a CXXC-type zinc finger. The Zn(2+) site is built by Cys-571, Cys-574, Cys-577, Cys-582, Cys-585, Cys-588, Cys-604, Cys-609, Cys-620, and Cys-623. The PHD-type zinc finger occupies Ser-617–Glu-678. Thr-632 carries the post-translational modification Phosphothreonine. Residues Cys-642, Cys-645, His-650, Cys-653, Cys-672, and Cys-675 each coordinate Zn(2+). A Phosphoserine modification is found at Ser-692. The disordered stretch occupies residues Leu-705–Val-789. Thr-713 carries the post-translational modification Phosphothreonine. Phosphoserine occurs at positions 718 and 731. Basic and acidic residues-rich tracts occupy residues Ser-746 to Phe-757 and Thr-771 to Val-789. Ser-825, Ser-868, and Ser-882 each carry phosphoserine. The segment at Cys-840–Asp-886 is disordered. Residues Glu-851–Glu-870 are compositionally biased toward acidic residues. One can recognise an F-box domain in the interval Asp-888–Ser-935. 2 LRR repeats span residues Trp-960 to Leu-981 and Leu-983 to Trp-1009. Position 1019 is an ADP-ribosylarginine (Arg-1019). 4 LRR repeats span residues Gly-1047–His-1072, Cys-1073–Gly-1102, Cys-1103–Gly-1127, and Cys-1128–Lys-1155.

This sequence belongs to the JHDM1 histone demethylase family. In terms of assembly, part of a SCF (SKP1-cullin-F-box) protein ligase complex. Interacts with CBX5/HP1A; the interaction promotes CBX5 localization to chromatin. The SKP1-KDM2A complex interacts with UBB. It depends on Fe(2+) as a cofactor. In terms of processing, mono-ADP-ribosylated at Arg-1019 in response to DNA damage, leading to displacement from chromatin, resulting in increased dimethylation of histone H3 at 'Lys-36'.

The protein localises to the nucleus. Its subcellular location is the nucleoplasm. The protein resides in the chromosome. The enzyme catalyses N(6),N(6)-dimethyl-L-lysyl(36)-[histone H3] + 2 2-oxoglutarate + 2 O2 = L-lysyl(36)-[histone H3] + 2 formaldehyde + 2 succinate + 2 CO2. Histone demethylase that specifically demethylates 'Lys-36' of histone H3, thereby playing a central role in histone code. Preferentially demethylates dimethylated H3 'Lys-36' residue while it has weak or no activity for mono- and tri-methylated H3 'Lys-36'. May also recognize and bind to some phosphorylated proteins and promote their ubiquitination and degradation. Required to maintain the heterochromatic state. Associates with centromeres and represses transcription of small non-coding RNAs that are encoded by the clusters of satellite repeats at the centromere. Required to sustain centromeric integrity and genomic stability, particularly during mitosis. Regulates circadian gene expression by repressing the transcriptional activator activity of CLOCK-BMAL1 heterodimer and RORA in a catalytically-independent manner. This Mus musculus (Mouse) protein is Lysine-specific demethylase 2A (Kdm2a).